Reading from the N-terminus, the 1940-residue chain is Myosin-2 (1940 aa).

A Myosin N-terminal SH3-like domain is found at D33 to P82. Phosphothreonine is present on residues T64 and T69. The region spanning D86–D783 is the Myosin motor domain. K130 is modified (N6,N6,N6-trimethyllysine). G179 to T186 serves as a coordination point for ATP. At Y389 the chain carries Phosphotyrosine. At S392 the chain carries Phosphoserine. Residue T419 is modified to Phosphothreonine. S625 is modified (phosphoserine). An actin-binding region spans residues L660 to E682. Position 758 is a pros-methylhistidine (H758). Residues K762–G776 form an actin-binding region. The region spanning L786–S815 is the IQ domain. Residues L844–E1940 are a coiled coil. 4 positions are modified to phosphoserine: S1093, S1097, S1163, and S1238. The tract at residues R1154–E1173 is disordered. Residue T1242 is modified to Phosphothreonine. S1244 carries the phosphoserine modification. At T1256 the chain carries Phosphothreonine. Phosphoserine is present on S1262. T1287 carries the post-translational modification Phosphothreonine. S1289, S1293, S1304, and S1307 each carry phosphoserine. Phosphotyrosine is present on Y1465. T1468 bears the Phosphothreonine mark. At S1475 the chain carries Phosphoserine. A Phosphotyrosine modification is found at Y1493. A Phosphoserine modification is found at S1496. A Phosphothreonine modification is found at T1502. Phosphoserine is present on S1515. T1518 is subject to Phosphothreonine. Phosphoserine occurs at positions 1543, 1555, 1575, 1601, 1715, and 1727. 2 positions are modified to phosphothreonine: T1731 and T1737. Position 1740 is a phosphoserine (S1740). A disordered region spans residues K1884 to S1920.

This sequence belongs to the TRAFAC class myosin-kinesin ATPase superfamily. Myosin family. Muscle myosin is a hexameric protein that consists of 2 heavy chain subunits (MHC), 2 alkali light chain subunits (MLC) and 2 regulatory light chain subunits (MLC-2). Interacts with GCSAM.

The protein localises to the cytoplasm. The protein resides in the myofibril. Its function is as follows. Myosins are actin-based motor molecules with ATPase activity essential for muscle contraction. This is Myosin-2 (MYH2) from Canis lupus familiaris (Dog).